The sequence spans 161 residues: Disulfide bond formation protein B (161 aa).

The Cytoplasmic portion of the chain corresponds to 1-8; the sequence is MQANSRAY. A helical membrane pass occupies residues 9-25; it reads FLLIALVSFGLVGVALY. Residues 26-43 are Periplasmic-facing; it reads LQFEKGYQPCPLCVMQRF. A disulfide bridge links Cys35 with Cys38. A helical transmembrane segment spans residues 44-58; it reads AFIGIGIFSLLAAVA. At 59–63 the chain is on the cytoplasmic side; sequence QNTRS. A helical transmembrane segment spans residues 64–81; it reads LWQGLGMLSGIAGIAVAV. At 82–136 the chain is on the periplasmic side; the sequence is YHVSLLLNPKASCGIDPLENWVNALPTAKALPQVFYADGLCTAPLPPVLGLSVPA. A disulfide bond links Cys94 and Cys122. A helical transmembrane segment spans residues 137-155; it reads WSLIWLFILTLTLAVGLIR. Residues 156 to 161 are Cytoplasmic-facing; sequence REKNFR.

The protein belongs to the DsbB family.

The protein resides in the cell inner membrane. Its function is as follows. Required for disulfide bond formation in some periplasmic proteins. Acts by oxidizing the DsbA protein. This chain is Disulfide bond formation protein B, found in Cupriavidus necator (strain ATCC 17699 / DSM 428 / KCTC 22496 / NCIMB 10442 / H16 / Stanier 337) (Ralstonia eutropha).